Reading from the N-terminus, the 93-residue chain is Non-histone chromosomal protein 6A (93 aa).

Disordered regions lie at residues 1–23 and 69–93; these read MVTPREPKKRTTRKKKDPNAPKR and PYEAKAQADKKRYESEKELYNATLA. A compositionally biased stretch (basic residues) spans 7-16; sequence PKKRTTRKKK. A DNA-binding region (HMG box) is located at residues 21–89; sequence PKRALSAYMF…RYESEKELYN (69 aa). A compositionally biased stretch (basic and acidic residues) spans 69-87; the sequence is PYEAKAQADKKRYESEKEL.

Belongs to the NHP6 family. As to quaternary structure, weakly associates with the stable SPT16-POB3 heterodimer to form the FACT (yFACT or SNP) complex, which is associated with nucleosomes. Multiple molecules of NHP6 (NHP6A and/or NHP6B) are required to recruit the SPT16-POB3 heterodimer to DNA.

Its subcellular location is the nucleus. It is found in the chromosome. DNA-binding protein that induces severe bending of DNA. Required for DNA-binding by the FACT complex, a general chromatin factor that acts to reorganize nucleosomes. The FACT complex is involved in multiple processes that require DNA as a template such as mRNA elongation, DNA replication and DNA repair. Also augments the fidelity of transcription by RNA polymerase III independently of any role in the FACT complex. Required for transcriptional initiation fidelity of some but not all tRNA genes. Seems to be functionally redundant with NHP6B. The polypeptide is Non-histone chromosomal protein 6A (NHP6A) (Saccharomyces cerevisiae (strain ATCC 204508 / S288c) (Baker's yeast)).